Here is a 300-residue protein sequence, read N- to C-terminus: Ribosomal protein L11 methyltransferase (300 aa).

S-adenosyl-L-methionine is bound by residues threonine 152, glycine 173, aspartate 195, and asparagine 234.

It belongs to the methyltransferase superfamily. PrmA family.

It is found in the cytoplasm. It catalyses the reaction L-lysyl-[protein] + 3 S-adenosyl-L-methionine = N(6),N(6),N(6)-trimethyl-L-lysyl-[protein] + 3 S-adenosyl-L-homocysteine + 3 H(+). Functionally, methylates ribosomal protein L11. This Burkholderia cenocepacia (strain HI2424) protein is Ribosomal protein L11 methyltransferase.